Here is a 166-residue protein sequence, read N- to C-terminus: 3-hydroxyacyl-[acyl-carrier-protein] dehydratase, mitochondrial (166 aa).

The N-terminal 17 residues, 1–17 (MLAKTVFPRGLLVLRSF), are a transit peptide targeting the mitochondrion. Positions 34 to 125 (ETRVFSSEDI…VQAIALRETK (92 aa)) constitute a MaoC-like domain.

Homodimer. Expressed in leaves, roots, siliques and flowers.

It localises to the mitochondrion. The catalysed reaction is a (3R)-hydroxyacyl-[ACP] = a (2E)-enoyl-[ACP] + H2O. It carries out the reaction (3R)-hydroxyhexadecanoyl-[ACP] = (2E)-hexadecenoyl-[ACP] + H2O. The enzyme catalyses (3R)-hydroxydecanoyl-[ACP] = (2E)-decenoyl-[ACP] + H2O. It participates in lipid metabolism; fatty acid biosynthesis. Its function is as follows. 3-hydroxyl-[acyl-carrier-protein] (3-hydroxyl-ACP) dehydratase required for mitochondrial fatty acid synthesis (mtFAS). MtFAS are essential for photorespiration and plant development, probably by influencing mitochondrial membrane lipid composition and other lipid metabolic pathways. This Arabidopsis thaliana (Mouse-ear cress) protein is 3-hydroxyacyl-[acyl-carrier-protein] dehydratase, mitochondrial.